Reading from the N-terminus, the 148-residue chain is Cytochrome c oxidase subunit 6, mitochondrial (148 aa).

The N-terminal 40 residues, 1–40 (MLSRAIFRNPVINRTLLRARPGAYHATRLTKNTFIQSRKY), are a transit peptide targeting the mitochondrion.

This sequence belongs to the cytochrome c oxidase subunit 5A family. In terms of assembly, component of the cytochrome c oxidase (complex IV, CIV), a multisubunit enzyme composed of 12 subunits. The complex is composed of a catalytic core of 3 subunits COX1, COX2 and COX3, encoded in the mitochondrial DNA, and 9 supernumerary subunits COX4, COX5A (or COX5B), COX6, COX7, COX8, COX9, COX12, COX13 and COX26, which are encoded in the nuclear genome. The complex exists as a monomer or a dimer and forms supercomplexes (SCs) in the inner mitochondrial membrane with a dimer of ubiquinol-cytochrome c oxidoreductase (cytochrome b-c1 complex, complex III, CIII), resulting in 2 different assemblies (supercomplexes III(2)IV and III(2)IV(2)). COX26 interacts with COX1, COX2, COX6 and COX9.

Its subcellular location is the mitochondrion inner membrane. Its pathway is energy metabolism; oxidative phosphorylation. Functionally, component of the cytochrome c oxidase, the last enzyme in the mitochondrial electron transport chain which drives oxidative phosphorylation. The respiratory chain contains 3 multisubunit complexes succinate dehydrogenase (complex II, CII), ubiquinol-cytochrome c oxidoreductase (cytochrome b-c1 complex, complex III, CIII) and cytochrome c oxidase (complex IV, CIV), that cooperate to transfer electrons derived from NADH and succinate to molecular oxygen, creating an electrochemical gradient over the inner membrane that drives transmembrane transport and the ATP synthase. Cytochrome c oxidase is the component of the respiratory chain that catalyzes the reduction of oxygen to water. Electrons originating from reduced cytochrome c in the intermembrane space (IMS) are transferred via the dinuclear copper A center (CU(A)) of COX2 and heme A of COX1 to the active site in COX1, a binuclear center (BNC) formed by heme A3 and copper B (CU(B)). The BNC reduces molecular oxygen to 2 water molecules using 4 electrons from cytochrome c in the IMS and 4 protons from the mitochondrial matrix. COX6 may stabilize the region of CIV at the interface with CIII, supporting a role in formation or stability of the CIII(2)IV(2) SC. In Saccharomyces cerevisiae (strain ATCC 204508 / S288c) (Baker's yeast), this protein is Cytochrome c oxidase subunit 6, mitochondrial (COX6).